A 143-amino-acid chain; its full sequence is 3-hydroxyacyl-[acyl-carrier-protein] dehydratase FabZ (143 aa).

Residue H47 is part of the active site.

Belongs to the thioester dehydratase family. FabZ subfamily.

Its subcellular location is the cytoplasm. The catalysed reaction is a (3R)-hydroxyacyl-[ACP] = a (2E)-enoyl-[ACP] + H2O. In terms of biological role, involved in unsaturated fatty acids biosynthesis. Catalyzes the dehydration of short chain beta-hydroxyacyl-ACPs and long chain saturated and unsaturated beta-hydroxyacyl-ACPs. In Moorella thermoacetica (strain ATCC 39073 / JCM 9320), this protein is 3-hydroxyacyl-[acyl-carrier-protein] dehydratase FabZ.